We begin with the raw amino-acid sequence, 72 residues long: DNA-directed RNA polymerase subunit omega (72 aa).

It belongs to the RNA polymerase subunit omega family. The RNAP catalytic core consists of 2 alpha, 1 beta, 1 beta' and 1 omega subunit. When a sigma factor is associated with the core the holoenzyme is formed, which can initiate transcription.

The catalysed reaction is RNA(n) + a ribonucleoside 5'-triphosphate = RNA(n+1) + diphosphate. In terms of biological role, promotes RNA polymerase assembly. Latches the N- and C-terminal regions of the beta' subunit thereby facilitating its interaction with the beta and alpha subunits. The chain is DNA-directed RNA polymerase subunit omega from Staphylococcus aureus (strain Mu3 / ATCC 700698).